We begin with the raw amino-acid sequence, 234 residues long: 1-(5-phosphoribosyl)-5-[(5-phosphoribosylamino)methylideneamino] imidazole-4-carboxamide isomerase (234 aa).

The active-site Proton acceptor is the Asp-9. The Proton donor role is filled by Asp-131.

Belongs to the HisA/HisF family.

The protein resides in the cytoplasm. It carries out the reaction 1-(5-phospho-beta-D-ribosyl)-5-[(5-phospho-beta-D-ribosylamino)methylideneamino]imidazole-4-carboxamide = 5-[(5-phospho-1-deoxy-D-ribulos-1-ylimino)methylamino]-1-(5-phospho-beta-D-ribosyl)imidazole-4-carboxamide. It participates in amino-acid biosynthesis; L-histidine biosynthesis; L-histidine from 5-phospho-alpha-D-ribose 1-diphosphate: step 4/9. This chain is 1-(5-phosphoribosyl)-5-[(5-phosphoribosylamino)methylideneamino] imidazole-4-carboxamide isomerase, found in Staphylococcus aureus (strain bovine RF122 / ET3-1).